Reading from the N-terminus, the 246-residue chain is 2,3-bisphosphoglycerate-dependent phosphoglycerate mutase (246 aa).

Substrate-binding positions include 9–16, 22–23, arginine 61, 88–91, lysine 99, 115–116, and 181–182; these read RHGQSAWN, TG, ERHY, RR, and GN. Catalysis depends on histidine 10, which acts as the Tele-phosphohistidine intermediate. Residue glutamate 88 is the Proton donor/acceptor of the active site.

This sequence belongs to the phosphoglycerate mutase family. BPG-dependent PGAM subfamily.

The catalysed reaction is (2R)-2-phosphoglycerate = (2R)-3-phosphoglycerate. It participates in carbohydrate degradation; glycolysis; pyruvate from D-glyceraldehyde 3-phosphate: step 3/5. In terms of biological role, catalyzes the interconversion of 2-phosphoglycerate and 3-phosphoglycerate. In Bifidobacterium longum (strain DJO10A), this protein is 2,3-bisphosphoglycerate-dependent phosphoglycerate mutase.